Here is a 454-residue protein sequence, read N- to C-terminus: Pyrrolysine--tRNA ligase (454 aa).

The tract at residues 102 to 138 (TRTKKAMPKSVARAPKPLENTEAAQAQPSGSKFSPAI) is disordered. Polar residues predominate over residues 123-133 (EAAQAQPSGSK).

The protein belongs to the class-II aminoacyl-tRNA synthetase family.

The protein localises to the cytoplasm. It carries out the reaction tRNA(Pyl) + L-pyrrolysine + ATP = L-pyrrolysyl-tRNA(Pyl) + AMP + diphosphate. Catalyzes the attachment of pyrrolysine to tRNA(Pyl). Pyrrolysine is a lysine derivative encoded by the termination codon UAG. The protein is Pyrrolysine--tRNA ligase of Methanosarcina mazei (strain ATCC BAA-159 / DSM 3647 / Goe1 / Go1 / JCM 11833 / OCM 88) (Methanosarcina frisia).